The chain runs to 289 residues: ATP phosphoribosyltransferase (289 aa).

Belongs to the ATP phosphoribosyltransferase family. Long subfamily. Mg(2+) serves as cofactor.

The protein resides in the cytoplasm. It carries out the reaction 1-(5-phospho-beta-D-ribosyl)-ATP + diphosphate = 5-phospho-alpha-D-ribose 1-diphosphate + ATP. It functions in the pathway amino-acid biosynthesis; L-histidine biosynthesis; L-histidine from 5-phospho-alpha-D-ribose 1-diphosphate: step 1/9. With respect to regulation, feedback inhibited by histidine. Catalyzes the condensation of ATP and 5-phosphoribose 1-diphosphate to form N'-(5'-phosphoribosyl)-ATP (PR-ATP). Has a crucial role in the pathway because the rate of histidine biosynthesis seems to be controlled primarily by regulation of HisG enzymatic activity. This Koribacter versatilis (strain Ellin345) protein is ATP phosphoribosyltransferase.